Reading from the N-terminus, the 314-residue chain is 3'-5' exoribonuclease YhaM (314 aa).

Residues 163–279 (HVVSMLDLAK…LHYIDNLDAK (117 aa)) enclose the HD domain.

This sequence belongs to the YhaM family.

Shows a 3'-5' exoribonuclease activity. The protein is 3'-5' exoribonuclease YhaM of Bacillus anthracis (strain CDC 684 / NRRL 3495).